Here is a 233-residue protein sequence, read N- to C-terminus: Aspartate/glutamate leucyltransferase (233 aa).

Belongs to the R-transferase family. Bpt subfamily.

It is found in the cytoplasm. The catalysed reaction is N-terminal L-glutamyl-[protein] + L-leucyl-tRNA(Leu) = N-terminal L-leucyl-L-glutamyl-[protein] + tRNA(Leu) + H(+). The enzyme catalyses N-terminal L-aspartyl-[protein] + L-leucyl-tRNA(Leu) = N-terminal L-leucyl-L-aspartyl-[protein] + tRNA(Leu) + H(+). Its function is as follows. Functions in the N-end rule pathway of protein degradation where it conjugates Leu from its aminoacyl-tRNA to the N-termini of proteins containing an N-terminal aspartate or glutamate. This is Aspartate/glutamate leucyltransferase from Vibrio cholerae serotype O1 (strain ATCC 39541 / Classical Ogawa 395 / O395).